We begin with the raw amino-acid sequence, 405 residues long: Glucose-1-phosphate adenylyltransferase 1 (405 aa).

Alpha-D-glucose 1-phosphate is bound by residues Y96, G161, 176–177 (EK), and S194.

Belongs to the bacterial/plant glucose-1-phosphate adenylyltransferase family. In terms of assembly, homotetramer.

The enzyme catalyses alpha-D-glucose 1-phosphate + ATP + H(+) = ADP-alpha-D-glucose + diphosphate. The protein operates within glycan biosynthesis; glycogen biosynthesis. Functionally, involved in the biosynthesis of ADP-glucose, a building block required for the elongation reactions to produce glycogen. Catalyzes the reaction between ATP and alpha-D-glucose 1-phosphate (G1P) to produce pyrophosphate and ADP-Glc. This chain is Glucose-1-phosphate adenylyltransferase 1, found in Vibrio vulnificus (strain YJ016).